A 464-amino-acid polypeptide reads, in one-letter code: Transcription factor EAT1 (464 aa).

The tract at residues 261–274 (GKGKANFATERERR) is basic motif; degenerate. Positions 261–310 (GKGKANFATERERREQLNVKFRTLRMLFPNPTKNDRASIVGDAIEYIDEL) constitute a bHLH domain. The segment at 275-310 (EQLNVKFRTLRMLFPNPTKNDRASIVGDAIEYIDEL) is helix-loop-helix motif. The interval 338–357 (QEAAADGESSSMRPVRDDQD) is disordered.

It belongs to the bHLH protein family. As to quaternary structure, interacts with TDR.

Its subcellular location is the nucleus. Transcription factor involved in the regulation of tapetum programmed cell death (PCD) and degradation during male reproductive development. Interacts with TDR and promote tapetal PCD by regulating the expression of RTS, and the two lipid-transfer proteins C4 and C6, which function in microspore development. Acts downstream from and interacts with TDR in the regulation of tapetal PCD. Regulates directly the aspartic protease AP25 and AP37 during tapetal PCD. May not target the cysteine protease CP1. The sequence is that of Transcription factor EAT1 from Oryza sativa subsp. japonica (Rice).